Consider the following 142-residue polypeptide: Histone H2B (142 aa).

Positions M1–P10 are enriched in basic and acidic residues. Residues M1–R50 form a disordered region. 2 positions are modified to N6-acetyllysine; alternate: K8 and K9. Residues K8 and K9 each participate in a glycyl lysine isopeptide (Lys-Gly) (interchain with G-Cter in SUMO); alternate cross-link. The segment covering S11–E28 has biased composition (low complexity). At K24 the chain carries N6-acetyllysine. Over residues S40–R50 the composition is skewed to basic and acidic residues. K137 participates in a covalent cross-link: Glycyl lysine isopeptide (Lys-Gly) (interchain with G-Cter in ubiquitin).

The protein belongs to the histone H2B family. As to quaternary structure, the nucleosome is a histone octamer containing two molecules each of H2A, H2B, H3 and H4 assembled in one H3-H4 heterotetramer and two H2A-H2B heterodimers. The octamer wraps approximately 147 bp of DNA. In terms of processing, monoubiquitinated by the UBC2-BRE1 complex to form H2BK123ub1. H2BK123ub1 gives a specific tag for epigenetic transcriptional activation and is also prerequisite for H3K4me and H3K79me formation. H2BK123ub1 also modulates the formation of double-strand breaks during meiosis and is a prerequisite for DNA-damage checkpoint activation. Post-translationally, acetylation of N-terminal lysines and particularly formation of H2BK11ac has a positive effect on transcription. Sumoylation to form H2BK6su or H2BK7su occurs preferentially near the telomeres and represses gene transcription.

Its subcellular location is the nucleus. It is found in the chromosome. Functionally, core component of nucleosome. Nucleosomes wrap and compact DNA into chromatin, limiting DNA accessibility to the cellular machineries which require DNA as a template. Histones thereby play a central role in transcription regulation, DNA repair, DNA replication and chromosomal stability. DNA accessibility is regulated via a complex set of post-translational modifications of histones, also called histone code, and nucleosome remodeling. This chain is Histone H2B (HTB1), found in Mycosarcoma maydis (Corn smut fungus).